We begin with the raw amino-acid sequence, 174 residues long: Crossover junction endodeoxyribonuclease RuvC (174 aa).

Active-site residues include Asp8, Glu67, and Asp139. Positions 8, 67, and 139 each coordinate Mg(2+).

It belongs to the RuvC family. As to quaternary structure, homodimer which binds Holliday junction (HJ) DNA. The HJ becomes 2-fold symmetrical on binding to RuvC with unstacked arms; it has a different conformation from HJ DNA in complex with RuvA. In the full resolvosome a probable DNA-RuvA(4)-RuvB(12)-RuvC(2) complex forms which resolves the HJ. Mg(2+) is required as a cofactor.

The protein resides in the cytoplasm. It carries out the reaction Endonucleolytic cleavage at a junction such as a reciprocal single-stranded crossover between two homologous DNA duplexes (Holliday junction).. Functionally, the RuvA-RuvB-RuvC complex processes Holliday junction (HJ) DNA during genetic recombination and DNA repair. Endonuclease that resolves HJ intermediates. Cleaves cruciform DNA by making single-stranded nicks across the HJ at symmetrical positions within the homologous arms, yielding a 5'-phosphate and a 3'-hydroxyl group; requires a central core of homology in the junction. The consensus cleavage sequence is 5'-(A/T)TT(C/G)-3'. Cleavage occurs on the 3'-side of the TT dinucleotide at the point of strand exchange. HJ branch migration catalyzed by RuvA-RuvB allows RuvC to scan DNA until it finds its consensus sequence, where it cleaves and resolves the cruciform DNA. The polypeptide is Crossover junction endodeoxyribonuclease RuvC (Pseudomonas syringae pv. syringae (strain B728a)).